The sequence spans 137 residues: Histone H2B (137 aa).

Residues 1-10 (MAPKAADKKP) are compositionally biased toward basic and acidic residues. The tract at residues 1 to 46 (MAPKAADKKPASKAPATASKAPEKKDAGKKTAASGDKKKRSKSRKE) is disordered. Lysine 8 and lysine 9 each carry N6-acetyllysine; alternate. Glycyl lysine isopeptide (Lys-Gly) (interchain with G-Cter in SUMO); alternate cross-links involve residues lysine 8 and lysine 9. Residue serine 12 is modified to Phosphoserine. An N6-acetyllysine modification is found at lysine 13. Lysine 24 bears the N6-acetyllysine; alternate mark. Lysine 24 participates in a covalent cross-link: Glycyl lysine isopeptide (Lys-Gly) (interchain with G-Cter in SUMO); alternate. A Glycyl lysine isopeptide (Lys-Gly) (interchain with G-Cter in SUMO) cross-link involves residue lysine 25. Residue lysine 131 forms a Glycyl lysine isopeptide (Lys-Gly) (interchain with G-Cter in ubiquitin) linkage.

It belongs to the histone H2B family. In terms of assembly, the nucleosome is a histone octamer containing two molecules each of H2A, H2B, H3 and H4 assembled in one H3-H4 heterotetramer and two H2A-H2B heterodimers. The octamer wraps approximately 147 bp of DNA. Monoubiquitinated by the UBC2-BRE1 complex to form H2BK123ub1. H2BK123ub1 gives a specific tag for epigenetic transcriptional activation and is also prerequisite for H3K4me and H3K79me formation. H2BK123ub1 also modulates the formation of double-strand breaks during meiosis and is a prerequisite for DNA-damage checkpoint activation. In terms of processing, phosphorylated to form H2BS10ph during progression through meiotic prophase. May be correlated with chromosome condensation. Post-translationally, acetylated by GCN5 to form H2BK11ac and H2BK16ac. H2BK16ac can also be formed by ESA1. Acetylation of N-terminal lysines and particularly formation of H2BK11acK16ac has a positive effect on transcription. Sumoylation to form H2BK6su or H2BK7su, and probably also H2BK16su or H2BK17su, occurs preferentially near the telomeres and represses gene transcription.

It is found in the nucleus. Its subcellular location is the chromosome. Functionally, core component of nucleosome. Nucleosomes wrap and compact DNA into chromatin, limiting DNA accessibility to the cellular machineries which require DNA as a template. Histones thereby play a central role in transcription regulation, DNA repair, DNA replication and chromosomal stability. DNA accessibility is regulated via a complex set of post-translational modifications of histones, also called histone code, and nucleosome remodeling. The chain is Histone H2B (HTB1) from Gibberella zeae (strain ATCC MYA-4620 / CBS 123657 / FGSC 9075 / NRRL 31084 / PH-1) (Wheat head blight fungus).